Consider the following 517-residue polypeptide: Glucans biosynthesis protein G (517 aa).

Residues 1 to 28 form the signal peptide; the sequence is MKHKLQMMKMRWLSAAVMLTLYTSSSWA.

This sequence belongs to the OpgD/OpgG family.

It localises to the periplasm. It participates in glycan metabolism; osmoregulated periplasmic glucan (OPG) biosynthesis. In terms of biological role, involved in the biosynthesis of osmoregulated periplasmic glucans (OPGs). The chain is Glucans biosynthesis protein G from Escherichia coli O1:K1 / APEC.